We begin with the raw amino-acid sequence, 80 residues long: U1-nemetoxin-Csp1a (80 aa).

The first 20 residues, 1–20 (MKYFVVFCVLIIAVAAFTSA), serve as a signal peptide directing secretion. Positions 21–41 (AEDGEVFEENPLEFPKTIQKR) are excised as a propeptide. 4 disulfide bridges follow: Cys-42-Cys-56, Cys-49-Cys-60, Cys-55-Cys-77, and Cys-66-Cys-73.

Belongs to the neurotoxin 13 (insecticidal toxin ABC) family. 02 (Calisoga) subfamily. In terms of tissue distribution, expressed by the venom gland.

It localises to the secreted. Causes paralysis to insect larvae (H.virescens). This toxin is active only on insects. In Calisoga sp. (Spider), this protein is U1-nemetoxin-Csp1a.